The chain runs to 458 residues: Bifunctional thioredoxin reductase/thioredoxin (458 aa).

A thioredoxin reductase region spans residues 1–321; that stretch reads MNTTPSAHET…LAEHAGSKAN (321 aa). Residues 19-22, 41-48, Asn57, and Val90 contribute to the FAD site; these read SGPA and EGTSFGGA. Cys142 and Cys145 are oxidised to a cystine. Positions 163, 182, 188, 245, and 265 each coordinate NADP(+). FAD contacts are provided by residues Asp285 and 292 to 295; that span reads RQAI. An NADP(+)-binding site is contributed by Arg292. The segment at 322-347 is linker; the sequence is ETTEETGDVDSTDTTDWSTAMTDAKN. The Thioredoxin domain maps to 341–455; sequence AMTDAKNAGV…LLRDLSDVVP (115 aa). A disulfide bridge links Cys379 with Cys382.

It in the N-terminal section; belongs to the class-II pyridine nucleotide-disulfide oxidoreductase family. As to quaternary structure, homodimer. It depends on FAD as a cofactor.

It is found in the cytoplasm. It catalyses the reaction [thioredoxin]-dithiol + NADP(+) = [thioredoxin]-disulfide + NADPH + H(+). The chain is Bifunctional thioredoxin reductase/thioredoxin (trxB/A) from Mycobacterium leprae (strain TN).